Consider the following 247-residue polypeptide: Synaptogyrin homolog 1 (247 aa).

In terms of domain architecture, MARVEL spans 21 to 175 (FFKKPTVLFR…AAFFAWRRYE (155 aa)). The next 4 membrane-spanning stretches (helical) occupy residues 25-45 (PTVL…YSVS), 69-89 (CSFA…LIVL), 105-125 (AVLA…IGFF), and 151-171 (FGIL…FFAW). The segment at 206–247 (DSTGIGHVGAPPPQSSYQSGAAPQTMQQPPSNPYTQSEGYGY) is disordered. A compositionally biased stretch (polar residues) spans 220-247 (SSYQSGAAPQTMQQPPSNPYTQSEGYGY).

It belongs to the synaptogyrin family. In terms of tissue distribution, expressed in a wide variety of neurons and is expressed weakly in the non-neuronal distal tip cells. A punctate pattern was observed in the ventral and dorsal nerve cords and the nerve ring. Weak expression is seen in neuronal cell bodies and commissures.

Its subcellular location is the membrane. The polypeptide is Synaptogyrin homolog 1 (sng-1) (Caenorhabditis elegans).